A 628-amino-acid chain; its full sequence is Chaperone protein DnaK (628 aa).

The residue at position 195 (T195) is a Phosphothreonine; by autocatalysis. A disordered region spans residues 545 to 628; that stretch reads QLEENEGAAQ…VIDADFKAAE (84 aa). The segment covering 555 to 591 has biased composition (basic and acidic residues); that stretch reads DAKDALKAAADEAEEAVRSEDDARIESAQKRLEEELR. Positions 596–612 are enriched in low complexity; that stretch reads AQQAAGQGQPQGAQAQG. Residues 614–628 show a composition bias toward basic and acidic residues; sequence KADDDVIDADFKAAE.

Belongs to the heat shock protein 70 family.

Its function is as follows. Acts as a chaperone. In Deinococcus deserti (strain DSM 17065 / CIP 109153 / LMG 22923 / VCD115), this protein is Chaperone protein DnaK.